Consider the following 1014-residue polypeptide: SUMO-specific isopeptidase USPL1 (1014 aa).

2 disordered regions span residues 137 to 158 (TFTD…EEQP) and 275 to 318 (EEKP…VSDE). Residues 275-289 (EEKPVSLVHTEDQHL) show a composition bias toward basic and acidic residues. The 282-residue stretch at 355-636 (LFWKNEENMC…EFHILFWETD (282 aa)) folds into the USP domain. Cys-364 functions as the Nucleophile in the catalytic mechanism. The segment at 364-631 (CWLDAMLVML…PFPSSEFHIL (268 aa)) is SUMO-binding. Catalysis depends on His-592, which acts as the Proton acceptor. Disordered stretches follow at residues 794–823 (HPSF…YDKH) and 844–867 (NSQP…AGQE). Residues 802–815 (IRPPPPLPPAPKPK) show a composition bias toward pro residues.

The protein belongs to the peptidase C19 family.

The protein resides in the nucleus. The protein localises to the cajal body. Functionally, SUMO-specific isopeptidase involved in protein desumoylation. Specifically binds SUMO proteins with a higher affinity for sumo2 and sumo3 which it cleaves more efficiently. Also able to process full-length SUMO proteins to their mature forms. Plays a key role in RNA polymerase-II-mediated snRNA transcription in the Cajal bodies. Is a component of complexes that can bind to U snRNA genes. This chain is SUMO-specific isopeptidase USPL1 (uspl1), found in Danio rerio (Zebrafish).